The following is a 439-amino-acid chain: Trigger factor (439 aa).

Positions 163-248 (GDIAVIDFEG…LNQIKERVLP (86 aa)) constitute a PPIase FKBP-type domain.

It belongs to the FKBP-type PPIase family. Tig subfamily.

Its subcellular location is the cytoplasm. The catalysed reaction is [protein]-peptidylproline (omega=180) = [protein]-peptidylproline (omega=0). In terms of biological role, involved in protein export. Acts as a chaperone by maintaining the newly synthesized protein in an open conformation. Functions as a peptidyl-prolyl cis-trans isomerase. This Syntrophotalea carbinolica (strain DSM 2380 / NBRC 103641 / GraBd1) (Pelobacter carbinolicus) protein is Trigger factor.